The sequence spans 183 residues: U3 small nucleolar ribonucleoprotein protein IMP3 (183 aa).

The S4 RNA-binding domain maps to 109–175 (RRLPVIMHRL…IKKTLLRYRN (67 aa)).

Belongs to the universal ribosomal protein uS4 family. In terms of assembly, component of a heterotrimeric complex containing IMP3, IMP4 and MPP10. Interacts with MPP10. Component of the ribosomal small subunit (SSU) processome composed of at least 40 protein subunits and snoRNA U3.

The protein localises to the nucleus. It localises to the nucleolus. Its function is as follows. Required for the early cleavages at sites A0, A1 and A2 during 18S ribosomal pre-RNA processing. The protein is U3 small nucleolar ribonucleoprotein protein IMP3 (IMP3) of Saccharomyces cerevisiae (strain ATCC 204508 / S288c) (Baker's yeast).